Consider the following 426-residue polypeptide: mRNA cap guanine-N(7) methyltransferase (426 aa).

An mRNA cap 0 methyltransferase domain is found at 138–421; the sequence is SPIIKLRNFN…FYTTFAFRKV (284 aa). 147-148 contributes to the mRNA binding site; sequence NN. S-adenosyl-L-methionine-binding residues include K151, A169, D191, D220, Q246, and Y251.

This sequence belongs to the class I-like SAM-binding methyltransferase superfamily. mRNA cap 0 methyltransferase family.

It is found in the nucleus. It carries out the reaction a 5'-end (5'-triphosphoguanosine)-ribonucleoside in mRNA + S-adenosyl-L-methionine = a 5'-end (N(7)-methyl 5'-triphosphoguanosine)-ribonucleoside in mRNA + S-adenosyl-L-homocysteine. In terms of biological role, responsible for methylating the 5'-cap structure of mRNAs. This chain is mRNA cap guanine-N(7) methyltransferase (ABD1), found in Kluyveromyces lactis (strain ATCC 8585 / CBS 2359 / DSM 70799 / NBRC 1267 / NRRL Y-1140 / WM37) (Yeast).